An 810-amino-acid polypeptide reads, in one-letter code: Bifunctional aspartokinase/homoserine dehydrogenase 2 (810 aa).

The segment at 2–252 is aspartokinase; it reads SVIAQAGAKG…VKDACLLPLL (251 aa). The interface stretch occupies residues 253-463; the sequence is RLDEASELAR…RAEKRIGLVL (211 aa). The homoserine dehydrogenase stretch occupies residues 464-810; it reads FGKGNIGSRW…SDINRLAQLL (347 aa). NADP(+) contacts are provided by N468 and I469. NAD(+) is bound by residues I469 and V498. Position 469 (I469) interacts with NADPH. Residues R501, T549, and K573 each coordinate NADP(+). T549 is a binding site for NAD(+). 2 residues coordinate NADPH: T549 and K573. The Na(+) site is built by V603, A605, and L607. Residues G658 and E661 each contribute to the NADP(+) site. L-homoserine contacts are provided by E661 and D672. Catalysis depends on K676, which acts as the Proton donor. G791 lines the NADP(+) pocket. Residue G791 participates in NAD(+) binding. Residue G791 coordinates NADPH.

It in the N-terminal section; belongs to the aspartokinase family. The protein in the C-terminal section; belongs to the homoserine dehydrogenase family. Homotetramer. Requires a metal cation as cofactor.

The enzyme catalyses L-homoserine + NADP(+) = L-aspartate 4-semialdehyde + NADPH + H(+). It carries out the reaction L-homoserine + NAD(+) = L-aspartate 4-semialdehyde + NADH + H(+). The catalysed reaction is L-aspartate + ATP = 4-phospho-L-aspartate + ADP. It participates in amino-acid biosynthesis; L-lysine biosynthesis via DAP pathway; (S)-tetrahydrodipicolinate from L-aspartate: step 1/4. It functions in the pathway amino-acid biosynthesis; L-methionine biosynthesis via de novo pathway; L-homoserine from L-aspartate: step 1/3. The protein operates within amino-acid biosynthesis; L-methionine biosynthesis via de novo pathway; L-homoserine from L-aspartate: step 3/3. Its pathway is amino-acid biosynthesis; L-threonine biosynthesis; L-threonine from L-aspartate: step 1/5. It participates in amino-acid biosynthesis; L-threonine biosynthesis; L-threonine from L-aspartate: step 3/5. Its function is as follows. Bifunctional aspartate kinase and homoserine dehydrogenase that catalyzes the first and the third steps toward the synthesis of lysine, methionine and threonine from aspartate. This Escherichia coli (strain K12) protein is Bifunctional aspartokinase/homoserine dehydrogenase 2 (metL).